Reading from the N-terminus, the 189-residue chain is Heme-binding protein 1 (189 aa).

This sequence belongs to the HEBP family. In terms of assembly, monomer.

The protein localises to the cytoplasm. In terms of biological role, may bind free porphyrinogens that may be present in the cell and thus facilitate removal of these potentially toxic compound. Binds with a high affinity to one molecule of heme or porphyrins. It binds metalloporphyrins, free porphyrins and N-methylprotoporphyrin with similar affinities. The chain is Heme-binding protein 1 (HEBP1) from Sus scrofa (Pig).